A 148-amino-acid polypeptide reads, in one-letter code: MKPRNINNSLPLQPLVPDQENKNKKNEEKSVNPVKITMGSGLNYIEQESLGGKYLTHDLSIKIADISEEIIQQAILSAMSIYKFSITDDLMSMAVNELIKLTKIENNVDLNKFTTICTDVLSPRVTRHNKEKNKRHSTLLKNPLFNFH.

Positions 1 to 11 (MKPRNINNSLP) are enriched in polar residues. The segment at 1-31 (MKPRNINNSLPLQPLVPDQENKNKKNEEKSV) is disordered. Residues 19–30 (QENKNKKNEEKS) are compositionally biased toward basic and acidic residues.

This is an uncharacterized protein from Escherichia coli (strain K12).